The sequence spans 455 residues: GTPase Der (455 aa).

2 EngA-type G domains span residues 4–169 and 178–353; these read PVVA…PPKS and IQLA…EQHR. Residues 10–17, 57–61, 120–123, 184–191, 231–235, and 296–299 each bind GTP; these read GRPNVGKS, DTGGL, NKCE, DTAGI, and NKWD. A KH-like domain is found at 354-439; the sequence is RRVSTSVVNE…PLKLFWRGKQ (86 aa).

This sequence belongs to the TRAFAC class TrmE-Era-EngA-EngB-Septin-like GTPase superfamily. EngA (Der) GTPase family. As to quaternary structure, associates with the 50S ribosomal subunit.

Its function is as follows. GTPase that plays an essential role in the late steps of ribosome biogenesis. This chain is GTPase Der, found in Synechococcus sp. (strain WH7803).